The primary structure comprises 200 residues: Recombination protein RecR (200 aa).

A C4-type zinc finger spans residues 57-72 (CRQCRTLTEQELCPQC). The Toprim domain maps to 80–175 (TQLCVVEGPT…VASRIAHGVP (96 aa)).

It belongs to the RecR family.

May play a role in DNA repair. It seems to be involved in an RecBC-independent recombinational process of DNA repair. It may act with RecF and RecO. The protein is Recombination protein RecR of Pseudomonas putida (strain ATCC 700007 / DSM 6899 / JCM 31910 / BCRC 17059 / LMG 24140 / F1).